The following is a 208-amino-acid chain: CRVRQCALGVHESCPLARGAKLSPGQHPRPSHAVRGRTAPGTRSSRRRTCEDGTSGPRDPRGATVALLYPLCDQPSAHLQTLPLEHRPLFRVIVEASRESSRKGDAPPSRRTGTRIHRELKLAHNQWLRANRESAIWPWRTAAMNFVAALAPRLQTHQHMHDLLMTCAFWCCLAHAATCSCAGLYSTHCRHLFRAFGCGGPASATASG.

Positions 17-61 (ARGAKLSPGQHPRPSHAVRGRTAPGTRSSRRRTCEDGTSGPRDPR) are disordered. Residues 167–179 (CAFWCCLAHAATC) fold into a zinc finger.

It belongs to the herpesviridae US10 family. Phosphorylated.

Its subcellular location is the virion tegument. The protein resides in the host nucleus matrix. The protein is Virion protein US10 homolog of Homo sapiens (Human).